The sequence spans 488 residues: Zinc finger protein 92 (488 aa).

A KRAB domain is found at 14–85 (VSFEDVSVYF…DDGMESAARS (72 aa)). 6 C2H2-type zinc fingers span residues 141-163 (YLCQ…RIIH), 169-191 (YECS…QRIH), 197-219 (YECG…QVIH), 225-247 (FVCR…TRIH), 253-275 (FECT…QRIH), and 281-303 (YICK…QLIH). The segment at 309–331 (FTCHEYGKAFRGLSGLSQHQRVH) adopts a C2H2-type 7; degenerate zinc-finger fold. The segment at 337 to 359 (YECSECGRAFGRRANLFKHQVVH) adopts a C2H2-type 8 zinc-finger fold. The interval 387 to 408 (QQPQEAGEGSSAEPQPIDTNEK) is disordered. The segment at 410–432 (QVCERCGQVFENKLLLCRHLRIH) adopts a C2H2-type 9 zinc-finger fold. Residues 435–488 (EDDKKQKPVISSTSVLEDKSLLSQHLEAQPTEESDSEGSVVFVYAEKPHGPSSP) are disordered.

This sequence belongs to the krueppel C2H2-type zinc-finger protein family. As to expression, highly expressed in pancreatic islets.

It localises to the nucleus. In terms of biological role, KRAB domain-containing zinc-finger protein that represses B1/Alu SINE transposable elements and modulates the transcription of nearby genes in a tissue-specific manner. It regulates glucose homeostasis and lipid metabolism by modulating the expression of the endocrine cell-defining transcription factor, MAFB, in pancreatic islets and, the fat metabolism regulator, ACACB, in adipose tissue and muscle. The polypeptide is Zinc finger protein 92 (Zfp92) (Mus musculus (Mouse)).